The primary structure comprises 847 residues: Beta-galactosidase 1 (847 aa).

Positions 1–32 (MGSKPNAMKNVVAMAAVSALFLLGFLVCSVSG) are cleaved as a signal peptide. The Proton donor role is filled by E190. E259 functions as the Nucleophile in the catalytic mechanism. N-linked (GlcNAc...) asparagine glycosylation is present at N469. Residues 761–847 (KPLHPKAHLQ…KKLAVEAVCA (87 aa)) form the SUEL-type lectin domain.

The protein belongs to the glycosyl hydrolase 35 family. In terms of tissue distribution, ubiquitous, at low levels.

The protein resides in the secreted. Its subcellular location is the extracellular space. It is found in the apoplast. The catalysed reaction is Hydrolysis of terminal non-reducing beta-D-galactose residues in beta-D-galactosides.. The sequence is that of Beta-galactosidase 1 (BGAL1) from Arabidopsis thaliana (Mouse-ear cress).